A 103-amino-acid chain; its full sequence is MYAVIKTGGKQHRVVVNELLKVELLKAETGETIKFEDVLMIVDGETVKIGQPIVEGASVEVEVVEHGRGEKIRIVKHNRRKHYHKEQGHRQWYTLLKIKAINA.

Belongs to the bacterial ribosomal protein bL21 family. Part of the 50S ribosomal subunit. Contacts protein L20.

In terms of biological role, this protein binds to 23S rRNA in the presence of protein L20. The polypeptide is Large ribosomal subunit protein bL21 (Psychrobacter arcticus (strain DSM 17307 / VKM B-2377 / 273-4)).